The following is a 493-amino-acid chain: D-glyceraldehyde dehydrogenase (NADP(+)) (493 aa).

Residues 144–147 (TPWN), arginine 155, 170–174 (KPSSD), 202–208 (KGSEIGD), 223–246 (GSTS…ILEL), cysteine 279, and 379–381 (EIF) contribute to the NADP(+) site. 2 residues coordinate substrate: asparagine 147 and arginine 155. Glutamate 245 functions as the Proton acceptor in the catalytic mechanism. Substrate is bound at residue cysteine 279. Cysteine 279 (proton donor) is an active-site residue.

Belongs to the aldehyde dehydrogenase family. Glyceraldehyde dehydrogenase subfamily. As to quaternary structure, homotetramer. Dimer of dimers.

The enzyme catalyses D-glyceraldehyde + NADP(+) + H2O = (R)-glycerate + NADPH + 2 H(+). It participates in carbohydrate degradation; glycolysis. With respect to regulation, stable for 2 hours at 60 degrees Celsius but activity is decreased to less than 50 percent within 15 minutes at 70 degrees Celsius. In terms of biological role, NADP-dependent dehydrogenase of the nED (non-phosphorylated Entner-Doudoroff) pathway with highest activity towards glyceraldehydes (e.g. D,L-glyceraldehyde and D-glyceraldehyde), to a lesser extent towards D,L-glyceraldehyde-3-phosphate and glycolaldehyde, but no activity towards aliphatic or aromatic aldehydes. The sequence is that of D-glyceraldehyde dehydrogenase (NADP(+)) from Picrophilus torridus (strain ATCC 700027 / DSM 9790 / JCM 10055 / NBRC 100828 / KAW 2/3).